The primary structure comprises 220 residues: Peptidyl-tRNA hydrolase (220 aa).

Tyrosine 14 is a tRNA binding site. The Proton acceptor role is filled by histidine 19. TRNA-binding residues include phenylalanine 66, asparagine 68, and asparagine 114. Residues 184-220 (QAFNSTDLRPRPEPVPAPQPADVSGPQETGPAERPEV) are disordered.

The protein belongs to the PTH family. In terms of assembly, monomer.

It localises to the cytoplasm. It carries out the reaction an N-acyl-L-alpha-aminoacyl-tRNA + H2O = an N-acyl-L-amino acid + a tRNA + H(+). Hydrolyzes ribosome-free peptidyl-tRNAs (with 1 or more amino acids incorporated), which drop off the ribosome during protein synthesis, or as a result of ribosome stalling. Its function is as follows. Catalyzes the release of premature peptidyl moieties from peptidyl-tRNA molecules trapped in stalled 50S ribosomal subunits, and thus maintains levels of free tRNAs and 50S ribosomes. This chain is Peptidyl-tRNA hydrolase, found in Deinococcus deserti (strain DSM 17065 / CIP 109153 / LMG 22923 / VCD115).